A 1196-amino-acid chain; its full sequence is Major DNA-binding protein (1196 aa).

The segment at C499–H512 is a zinc-finger region. 2 short sequence motifs (required for filament formation) span residues F843 to W844 and F1142 to F1144. The tract at residues G1158–L1196 is disordered. The segment at R1170–L1196 is required for nuclear localization. The span at F1174–L1196 shows a compositional bias: basic and acidic residues.

Belongs to the herpesviridae major DNA-binding protein family. In terms of assembly, homooligomers. Forms double-helical filaments necessary for the formation of replication compartments within the host nucleus. Interacts with the origin-binding protein. Interacts with the helicase primase complex; this interaction stimulates primer synthesis activity of the helicase-primase complex. Interacts with the DNA polymerase. Interacts with the alkaline exonuclease; this interaction increases its nuclease processivity.

The protein resides in the host nucleus. Its function is as follows. Plays several crucial roles in viral infection. Participates in the opening of the viral DNA origin to initiate replication by interacting with the origin-binding protein. May disrupt loops, hairpins and other secondary structures present on ssDNA to reduce and eliminate pausing of viral DNA polymerase at specific sites during elongation. Promotes viral DNA recombination by performing strand-transfer, characterized by the ability to transfer a DNA strand from a linear duplex to a complementary single-stranded DNA circle. Can also catalyze the renaturation of complementary single strands. Additionally, reorganizes the host cell nucleus, leading to the formation of prereplicative sites and replication compartments. This process is driven by the protein which can form double-helical filaments in the absence of DNA. The chain is Major DNA-binding protein from Homo sapiens (Human).